The following is a 479-amino-acid chain: Aspartyl/glutamyl-tRNA(Asn/Gln) amidotransferase subunit B (479 aa).

The protein belongs to the GatB/GatE family. GatB subfamily. In terms of assembly, heterotrimer of A, B and C subunits.

It catalyses the reaction L-glutamyl-tRNA(Gln) + L-glutamine + ATP + H2O = L-glutaminyl-tRNA(Gln) + L-glutamate + ADP + phosphate + H(+). The enzyme catalyses L-aspartyl-tRNA(Asn) + L-glutamine + ATP + H2O = L-asparaginyl-tRNA(Asn) + L-glutamate + ADP + phosphate + 2 H(+). Its function is as follows. Allows the formation of correctly charged Asn-tRNA(Asn) or Gln-tRNA(Gln) through the transamidation of misacylated Asp-tRNA(Asn) or Glu-tRNA(Gln) in organisms which lack either or both of asparaginyl-tRNA or glutaminyl-tRNA synthetases. The reaction takes place in the presence of glutamine and ATP through an activated phospho-Asp-tRNA(Asn) or phospho-Glu-tRNA(Gln). The protein is Aspartyl/glutamyl-tRNA(Asn/Gln) amidotransferase subunit B of Streptococcus pyogenes serotype M4 (strain MGAS10750).